The following is a 315-amino-acid chain: Putative S-adenosyl-L-methionine-dependent methyltransferase MAV_4557 (315 aa).

S-adenosyl-L-methionine-binding positions include D134 and 163–164 (DL).

The protein belongs to the UPF0677 family.

Functionally, exhibits S-adenosyl-L-methionine-dependent methyltransferase activity. This is Putative S-adenosyl-L-methionine-dependent methyltransferase MAV_4557 from Mycobacterium avium (strain 104).